The primary structure comprises 526 residues: Peptide chain release factor 3 (526 aa).

A tr-type G domain is found at 8-277 (NKRRTFAIIS…GLTEWAPKPQ (270 aa)). Residues 17–24 (SHPDAGKT), 85–89 (DTPGH), and 139–142 (NKLD) each bind GTP.

It belongs to the TRAFAC class translation factor GTPase superfamily. Classic translation factor GTPase family. PrfC subfamily.

The protein localises to the cytoplasm. In terms of biological role, increases the formation of ribosomal termination complexes and stimulates activities of RF-1 and RF-2. It binds guanine nucleotides and has strong preference for UGA stop codons. It may interact directly with the ribosome. The stimulation of RF-1 and RF-2 is significantly reduced by GTP and GDP, but not by GMP. The protein is Peptide chain release factor 3 of Actinobacillus pleuropneumoniae serotype 5b (strain L20).